Reading from the N-terminus, the 343-residue chain is Holliday junction branch migration complex subunit RuvB (343 aa).

Positions 4-193 (TDNLTAAQPQ…FGIVSRLEFY (190 aa)) are large ATPase domain (RuvB-L). Residues leucine 32, arginine 33, glycine 74, lysine 77, threonine 78, threonine 79, 140–142 (EDY), arginine 183, tyrosine 193, and arginine 230 each bind ATP. Threonine 78 provides a ligand contact to Mg(2+). Positions 194-264 (ENRDLTTIVS…VADAALSMLD (71 aa)) are small ATPAse domain (RuvB-S). The interval 267 to 343 (AQGLDVMDRK…YLHFGLPVEK (77 aa)) is head domain (RuvB-H). The DNA site is built by arginine 322 and arginine 327.

The protein belongs to the RuvB family. Homohexamer. Forms an RuvA(8)-RuvB(12)-Holliday junction (HJ) complex. HJ DNA is sandwiched between 2 RuvA tetramers; dsDNA enters through RuvA and exits via RuvB. An RuvB hexamer assembles on each DNA strand where it exits the tetramer. Each RuvB hexamer is contacted by two RuvA subunits (via domain III) on 2 adjacent RuvB subunits; this complex drives branch migration. In the full resolvosome a probable DNA-RuvA(4)-RuvB(12)-RuvC(2) complex forms which resolves the HJ.

The protein localises to the cytoplasm. It catalyses the reaction ATP + H2O = ADP + phosphate + H(+). Its function is as follows. The RuvA-RuvB-RuvC complex processes Holliday junction (HJ) DNA during genetic recombination and DNA repair, while the RuvA-RuvB complex plays an important role in the rescue of blocked DNA replication forks via replication fork reversal (RFR). RuvA specifically binds to HJ cruciform DNA, conferring on it an open structure. The RuvB hexamer acts as an ATP-dependent pump, pulling dsDNA into and through the RuvAB complex. RuvB forms 2 homohexamers on either side of HJ DNA bound by 1 or 2 RuvA tetramers; 4 subunits per hexamer contact DNA at a time. Coordinated motions by a converter formed by DNA-disengaged RuvB subunits stimulates ATP hydrolysis and nucleotide exchange. Immobilization of the converter enables RuvB to convert the ATP-contained energy into a lever motion, pulling 2 nucleotides of DNA out of the RuvA tetramer per ATP hydrolyzed, thus driving DNA branch migration. The RuvB motors rotate together with the DNA substrate, which together with the progressing nucleotide cycle form the mechanistic basis for DNA recombination by continuous HJ branch migration. Branch migration allows RuvC to scan DNA until it finds its consensus sequence, where it cleaves and resolves cruciform DNA. In Neisseria gonorrhoeae (strain NCCP11945), this protein is Holliday junction branch migration complex subunit RuvB.